Here is a 451-residue protein sequence, read N- to C-terminus: AP-4 complex subunit mu (451 aa).

The MHD domain occupies 184-450 (REEIFVDIIE…VTQANSYVAR (267 aa)).

It belongs to the adaptor complexes medium subunit family. In terms of assembly, adaptor protein complex 4 (AP-4) is a heterotetramer composed of two large adaptins (epsilon-type subunit and beta-type subunit), a medium adaptin (mu-type subunit) and a small adaptin (sigma-type subunit).

It localises to the golgi apparatus. The protein localises to the trans-Golgi network. It is found in the membrane. Its subcellular location is the coated pit. Subunit of novel type of clathrin- or non-clathrin-associated protein coat involved in targeting proteins from the trans-Golgi network (TGN) to the endosomal-lysosomal system. The chain is AP-4 complex subunit mu (AP4M) from Arabidopsis thaliana (Mouse-ear cress).